Reading from the N-terminus, the 177-residue chain is Parathyroid hormone-related protein (177 aa).

The first 24 residues, 1 to 24 (MLWRLVQQWSVAVFLLSYSVPSCG), serve as a signal peptide directing secretion. Positions 25–34 (RSVEELGRRL) are excised as a propeptide. An important for receptor binding region spans residues 57–68 (RFFLHHLIAEIH). The tract at residues 74–149 (ATSEVSPNSK…KRRTRSAWLT (76 aa)) is disordered. The span at 76–90 (SEVSPNSKPAPNTKN) shows a compositional bias: polar residues. The short motif at 108–129 (TNKVETYKEQPLKTPGKKKKSK) is the Nuclear localization signal element. Residues 109–118 (NKVETYKEQP) show a composition bias toward basic and acidic residues. Positions 122-132 (PGKKKKSKPGK) are enriched in basic residues.

This sequence belongs to the parathyroid hormone family. In terms of assembly, PTHrP interacts with PTH1R (via N-terminal extracellular domain). There are several secretory forms, including osteostatin, arising from endoproteolytic cleavage of the initial translation product. Each of these secretory forms is believed to have one or more of its own receptors that mediates the normal paracrine, autocrine and endocrine actions.

It is found in the secreted. The protein localises to the cytoplasm. The protein resides in the nucleus. Neuroendocrine peptide which is a critical regulator of cellular and organ growth, development, migration, differentiation and survival and of epithelial calcium ion transport. Acts by binding to its receptor, PTH1R, activating G protein-coupled receptor signaling. Regulates endochondral bone development and epithelial-mesenchymal interactions during the formation of the mammary glands and teeth. Required for skeletal homeostasis. Promotes mammary mesenchyme differentiation and bud outgrowth by modulating mesenchymal cell responsiveness to BMPs. Up-regulates BMPR1A expression in the mammary mesenchyme and this increases the sensitivity of these cells to BMPs and allows them to respond to BMP4 in a paracrine and/or autocrine fashion. BMP4 signaling in the mesenchyme, in turn, triggers epithelial outgrowth and augments MSX2 expression, which causes the mammary mesenchyme to inhibit hair follicle formation within the nipple sheath. In terms of biological role, potent inhibitor of osteoclastic bone resorption. The sequence is that of Parathyroid hormone-related protein (PTHLH) from Bos taurus (Bovine).